The following is a 625-amino-acid chain: Threonine--tRNA ligase (625 aa).

Residues 1 to 147 (MRILLIHSDY…TIVPGEAKKE (147 aa)) are editing domain. The segment at 206 to 505 (PHVKIMLEQE…MKKGKKPMYP (300 aa)) is catalytic. Residues Cys298, His350, and His474 each coordinate Zn(2+).

Belongs to the class-II aminoacyl-tRNA synthetase family. Homodimer. The cofactor is Zn(2+).

Its subcellular location is the cytoplasm. The enzyme catalyses tRNA(Thr) + L-threonine + ATP = L-threonyl-tRNA(Thr) + AMP + diphosphate + H(+). Catalyzes the attachment of threonine to tRNA(Thr) in a two-step reaction: L-threonine is first activated by ATP to form Thr-AMP and then transferred to the acceptor end of tRNA(Thr). Also edits incorrectly charged L-seryl-tRNA(Thr). The chain is Threonine--tRNA ligase from Thermococcus sibiricus (strain DSM 12597 / MM 739).